We begin with the raw amino-acid sequence, 289 residues long: Nucleotide-binding protein Franean1_2060 (289 aa).

An ATP-binding site is contributed by 13 to 20; that stretch reads GLSGAGRS. 64 to 67 is a binding site for GTP; that stretch reads DVRG.

It belongs to the RapZ-like family.

Its function is as follows. Displays ATPase and GTPase activities. This Parafrankia sp. (strain EAN1pec) protein is Nucleotide-binding protein Franean1_2060.